Reading from the N-terminus, the 346-residue chain is Olfactory receptor 13D1 (346 aa).

The Extracellular segment spans residues 1–57 (MYRFTDFDVSNISIYLNHVLFYTTQQAGDLEHMETRNYSAMTEFFLVGLSQYPELQL). Asn37 carries an N-linked (GlcNAc...) asparagine glycan. The helical transmembrane segment at 58–78 (FLFLLCLIMYMIILLGNSLLI) threads the bilayer. Residues 79–86 (IITILDSR) are Cytoplasmic-facing. The chain crosses the membrane as a helical span at residues 87-107 (LHTPMYFFLGNLSFLDICYTS). Topologically, residues 108–131 (SSIPPMLIIFMSERKSISFIGCAL) are extracellular. Residues Cys129 and Cys221 are joined by a disulfide bond. Residues 132 to 152 (QMVVSLGLGSTECVLLAVMAY) traverse the membrane as a helical segment. Residues 153 to 171 (DHYVAICNPLRYSIIMNGV) lie on the Cytoplasmic side of the membrane. Residues 172–192 (LYVQMAAWSWIIGCLTSLLQT) traverse the membrane as a helical segment. Residues 193–229 (VLTMMLPFCGNNVIDHITCEILALLKLVCSDITINVL) are Extracellular-facing. Residues 230 to 249 (IMTVTNIVSLVILLLLIFIS) form a helical membrane-spanning segment. Residues 250-269 (YVFILSSILRINCAEGRKKA) lie on the Cytoplasmic side of the membrane. Residues 270–290 (FSTCSAHSIVVILFYGSALFM) form a helical membrane-spanning segment. Residues 291–303 (YMKPKSKNTNTSD) are Extracellular-facing. N-linked (GlcNAc...) asparagine glycosylation is present at Asn300. The chain crosses the membrane as a helical span at residues 304-324 (EIIGLSYGVVSPMLNPIIYSL). Topologically, residues 325–346 (RNKEVKEAVKKVLSRHLHLLKM) are cytoplasmic.

Belongs to the G-protein coupled receptor 1 family.

It is found in the cell membrane. Odorant receptor. This is Olfactory receptor 13D1 (OR13D1) from Homo sapiens (Human).